The following is a 191-amino-acid chain: Orotate phosphoribosyltransferase (191 aa).

114 to 122 (EDVVTTGKS) contributes to the 5-phospho-alpha-D-ribose 1-diphosphate binding site. 2 residues coordinate orotate: threonine 118 and arginine 146.

It belongs to the purine/pyrimidine phosphoribosyltransferase family. PyrE subfamily. As to quaternary structure, homodimer. It depends on Mg(2+) as a cofactor.

It carries out the reaction orotidine 5'-phosphate + diphosphate = orotate + 5-phospho-alpha-D-ribose 1-diphosphate. It participates in pyrimidine metabolism; UMP biosynthesis via de novo pathway; UMP from orotate: step 1/2. Its function is as follows. Catalyzes the transfer of a ribosyl phosphate group from 5-phosphoribose 1-diphosphate to orotate, leading to the formation of orotidine monophosphate (OMP). The sequence is that of Orotate phosphoribosyltransferase from Clostridium botulinum (strain Langeland / NCTC 10281 / Type F).